Reading from the N-terminus, the 188-residue chain is uncharacterized protein (188 aa).

S14 is modified (phosphoserine). The disordered stretch occupies residues 165–188; sequence RQAMAAKRNRFRKNVRKLPNKKKH. The span at 171-188 shows a compositional bias: basic residues; that stretch reads KRNRFRKNVRKLPNKKKH.

The protein localises to the nucleus. Its subcellular location is the nucleolus. This is an uncharacterized protein from Schizosaccharomyces pombe (strain 972 / ATCC 24843) (Fission yeast).